Consider the following 163-residue polypeptide: Neurotrophin-3 (163 aa).

An N-terminal signal peptide occupies residues 1–3 (IQS). Positions 4-119 (TSMDQGILTE…VLNRTSRRKR (116 aa)) are excised as a propeptide. N-linked (GlcNAc...) asparagine glycosylation occurs at Asn-112.

This sequence belongs to the NGF-beta family.

The protein resides in the secreted. In terms of biological role, seems to promote the survival of visceral and proprioceptive sensory neurons. This Epicrates cenchria (Rainbow boa) protein is Neurotrophin-3 (NTF3).